The chain runs to 225 residues: Cytidylate kinase (225 aa).

An ATP-binding site is contributed by 10 to 18; sequence GPASSGKST.

It belongs to the cytidylate kinase family. Type 1 subfamily.

Its subcellular location is the cytoplasm. The catalysed reaction is CMP + ATP = CDP + ADP. The enzyme catalyses dCMP + ATP = dCDP + ADP. The chain is Cytidylate kinase from Streptococcus gordonii (strain Challis / ATCC 35105 / BCRC 15272 / CH1 / DL1 / V288).